Consider the following 385-residue polypeptide: Polyketide synthase 3 (385 aa).

The active site involves Cys157.

It belongs to the thiolase-like superfamily. Chalcone/stilbene synthases family. As to expression, expressed in male and female flowers, and seedlings.

It is found in the cytoplasm. In terms of biological role, polyketide synthase responsible for the biosynthesis of secondary metabolites. This is Polyketide synthase 3 (PKSF3) from Cannabis sativa (Hemp).